Reading from the N-terminus, the 132-residue chain is Small ribosomal subunit protein uS8 (132 aa).

Belongs to the universal ribosomal protein uS8 family. Part of the 30S ribosomal subunit. Contacts proteins S5 and S12.

Functionally, one of the primary rRNA binding proteins, it binds directly to 16S rRNA central domain where it helps coordinate assembly of the platform of the 30S subunit. The protein is Small ribosomal subunit protein uS8 of Lactobacillus delbrueckii subsp. bulgaricus (strain ATCC BAA-365 / Lb-18).